A 190-amino-acid chain; its full sequence is Holliday junction branch migration complex subunit RuvA (190 aa).

A domain I region spans residues 1-64 (MIGRITGTLI…EDAHILYGFA (64 aa)). The tract at residues 65–137 (TAAERGAFRE…MRGKLGADIG (73 aa)) is domain II. The tract at residues 137–141 (GATAH) is flexible linker. Residues 142–190 (AVPDSQTDILNALLALGYSDKESQAALKKLPEGTGVSEGIRLALKALVR) are domain III.

Belongs to the RuvA family. As to quaternary structure, homotetramer. Forms an RuvA(8)-RuvB(12)-Holliday junction (HJ) complex. HJ DNA is sandwiched between 2 RuvA tetramers; dsDNA enters through RuvA and exits via RuvB. An RuvB hexamer assembles on each DNA strand where it exits the tetramer. Each RuvB hexamer is contacted by two RuvA subunits (via domain III) on 2 adjacent RuvB subunits; this complex drives branch migration. In the full resolvosome a probable DNA-RuvA(4)-RuvB(12)-RuvC(2) complex forms which resolves the HJ.

The protein localises to the cytoplasm. In terms of biological role, the RuvA-RuvB-RuvC complex processes Holliday junction (HJ) DNA during genetic recombination and DNA repair, while the RuvA-RuvB complex plays an important role in the rescue of blocked DNA replication forks via replication fork reversal (RFR). RuvA specifically binds to HJ cruciform DNA, conferring on it an open structure. The RuvB hexamer acts as an ATP-dependent pump, pulling dsDNA into and through the RuvAB complex. HJ branch migration allows RuvC to scan DNA until it finds its consensus sequence, where it cleaves and resolves the cruciform DNA. The polypeptide is Holliday junction branch migration complex subunit RuvA (Bordetella petrii (strain ATCC BAA-461 / DSM 12804 / CCUG 43448)).